The primary structure comprises 87 residues: MDQLNAKEQQEFQKLVEQKQMKDFMRLYSGLVERCFTDCVNDFTSSKLTSKEESCILKCSEKFLKHSERVGQRFQEQNAALGQGLGR.

A Twin CX3C motif motif is present at residues Cys35 to Cys59. 2 disulfide bridges follow: Cys35–Cys59 and Cys39–Cys55.

This sequence belongs to the small Tim family. Heterohexamer; composed of 3 copies of TIM9 and 3 copies of TIM10, named soluble 70 kDa complex. Associates with the TIM22 complex, whose core is composed of TIM22 and TIM54. Interacts with the transmembrane regions of multi-pass transmembrane proteins in transit.

The protein localises to the mitochondrion inner membrane. Mitochondrial intermembrane chaperone that participates in the import and insertion of multi-pass transmembrane proteins into the mitochondrial inner membrane. Also required for the transfer of beta-barrel precursors from the TOM complex to the sorting and assembly machinery (SAM complex) of the outer membrane. Acts as a chaperone-like protein that protects the hydrophobic precursors from aggregation and guide them through the mitochondrial intermembrane space. The sequence is that of Mitochondrial import inner membrane translocase subunit TIM9 (TIM9) from Candida glabrata (strain ATCC 2001 / BCRC 20586 / JCM 3761 / NBRC 0622 / NRRL Y-65 / CBS 138) (Yeast).